We begin with the raw amino-acid sequence, 172 residues long: Large ribosomal subunit protein uL10 (172 aa).

It belongs to the universal ribosomal protein uL10 family. Part of the ribosomal stalk of the 50S ribosomal subunit. The N-terminus interacts with L11 and the large rRNA to form the base of the stalk. The C-terminus forms an elongated spine to which L12 dimers bind in a sequential fashion forming a multimeric L10(L12)X complex.

In terms of biological role, forms part of the ribosomal stalk, playing a central role in the interaction of the ribosome with GTP-bound translation factors. This is Large ribosomal subunit protein uL10 from Methylorubrum populi (strain ATCC BAA-705 / NCIMB 13946 / BJ001) (Methylobacterium populi).